Reading from the N-terminus, the 37-residue chain is Large ribosomal subunit protein bL36 (37 aa).

Belongs to the bacterial ribosomal protein bL36 family.

This is Large ribosomal subunit protein bL36 from Shewanella woodyi (strain ATCC 51908 / MS32).